Reading from the N-terminus, the 159-residue chain is Small ribosomal subunit protein uS4 (159 aa).

One can recognise an S4 RNA-binding domain in the interval 106-158 (RRLQTIVYRMGLAKSIHHARQLIVHGHVAVAGRRVTSPGFLVPRELEDKISLI).

This sequence belongs to the universal ribosomal protein uS4 family. Part of the 30S ribosomal subunit. Contacts protein S5. The interaction surface between S4 and S5 is involved in control of translational fidelity.

Functionally, one of the primary rRNA binding proteins, it binds directly to 16S rRNA where it nucleates assembly of the body of the 30S subunit. In terms of biological role, with S5 and S12 plays an important role in translational accuracy. This chain is Small ribosomal subunit protein uS4, found in Pyrobaculum aerophilum (strain ATCC 51768 / DSM 7523 / JCM 9630 / CIP 104966 / NBRC 100827 / IM2).